Here is a 125-residue protein sequence, read N- to C-terminus: Alpha-endosulfine (125 aa).

The span at 1 to 37 (MSDKYIGDSHLEETGEEKQDSQEKEAVTPEKAEEQKL) shows a compositional bias: basic and acidic residues. The tract at residues 1–52 (MSDKYIGDSHLEETGEEKQDSQEKEAVTPEKAEEQKLKAKYPNLGQKPGGSD) is disordered. Threonine 28 bears the Phosphothreonine; by CDK2 mark. The residue at position 67 (serine 67) is a Phosphoserine; by GWL. The tract at residues 86-107 (GPDKNLVTGDHIPTPQDLPQRK) is disordered. Position 99 is a phosphothreonine; by CDK2 (threonine 99). Serine 109 is subject to Phosphoserine; by PKA.

Belongs to the endosulfine family. As to quaternary structure, interacts (when phosphorylated at Ser-67) with ppp2r2d. Phosphorylation at Ser-67 by gwl during mitosis is essential for interaction with PPP2R2D (PR55-delta) and subsequent inactivation of PP2A. Phosphorylated by PKA.

The protein localises to the cytoplasm. Functionally, protein phosphatase inhibitor that specifically inhibits protein phosphatase 2A (PP2A) during mitosis. When phosphorylated at Ser-67 during mitosis, specifically interacts with ppp2r2d (PR55-delta) and inhibits its activity, leading to inactivation of PP2A, an essential condition to keep cyclin-B1-CDK1 activity high during M phase. This is Alpha-endosulfine (ensa) from Xenopus laevis (African clawed frog).